A 284-amino-acid chain; its full sequence is Distal membrane arm assembly component 2 (284 aa).

It belongs to the ATP synthase subunit s family. Associates with mitochondrial complex I assembly intermediates during its biogenesis.

Functionally, involved in the assembly of the mitochondrial membrane respiratory chain NADH dehydrogenase (Complex I). This chain is Distal membrane arm assembly component 2, found in Drosophila melanogaster (Fruit fly).